A 181-amino-acid chain; its full sequence is MALTISAQLDKFVSSYVEHAKGEGLKIAFDSEWPSPCYEETAKDGELVEWAPKRQSPPLSFNNVEDALSLKLHADYCCYFTTYYSDNLKAKAPQGDCELLQVFNREDFERLQQNLIGHLLMKQRLNQAPTLFFGLTDEEDFILTVINETGEVALEQVGQAPTQILANSLAEFIEQLSPLNA.

The protein belongs to the Syd family.

It is found in the cell inner membrane. Interacts with the SecY protein in vivo. May bind preferentially to an uncomplexed state of SecY, thus functioning either as a chelating agent for excess SecY in the cell or as a regulatory factor that negatively controls the translocase function. This chain is Protein Syd, found in Alteromonas mediterranea (strain DSM 17117 / CIP 110805 / LMG 28347 / Deep ecotype).